A 395-amino-acid chain; its full sequence is tRNA-specific 2-thiouridylase MnmA (395 aa).

ATP-binding positions include 7-14 (GLSGGVDS) and M33. The interval 95–97 (NPD) is interaction with target base in tRNA. The Nucleophile role is filled by C100. An intrachain disulfide couples C100 to C200. Position 124 (G124) interacts with ATP. The segment at 150–152 (KDQ) is interaction with tRNA. Residue C200 is the Cysteine persulfide intermediate of the active site. The interval 346–347 (RY) is interaction with tRNA.

This sequence belongs to the MnmA/TRMU family.

The protein resides in the cytoplasm. The catalysed reaction is S-sulfanyl-L-cysteinyl-[protein] + uridine(34) in tRNA + AH2 + ATP = 2-thiouridine(34) in tRNA + L-cysteinyl-[protein] + A + AMP + diphosphate + H(+). Catalyzes the 2-thiolation of uridine at the wobble position (U34) of tRNA, leading to the formation of s(2)U34. The chain is tRNA-specific 2-thiouridylase MnmA from Flavobacterium johnsoniae (strain ATCC 17061 / DSM 2064 / JCM 8514 / BCRC 14874 / CCUG 350202 / NBRC 14942 / NCIMB 11054 / UW101) (Cytophaga johnsonae).